The following is a 96-amino-acid chain: Large ribosomal subunit protein uL23 (96 aa).

This sequence belongs to the universal ribosomal protein uL23 family. In terms of assembly, part of the 50S ribosomal subunit. Contacts protein L29, and trigger factor when it is bound to the ribosome.

Its function is as follows. One of the early assembly proteins it binds 23S rRNA. One of the proteins that surrounds the polypeptide exit tunnel on the outside of the ribosome. Forms the main docking site for trigger factor binding to the ribosome. The protein is Large ribosomal subunit protein uL23 of Finegoldia magna (strain ATCC 29328 / DSM 20472 / WAL 2508) (Peptostreptococcus magnus).